A 714-amino-acid chain; its full sequence is ATP-dependent zinc metalloprotease FtsH (714 aa).

The Cytoplasmic portion of the chain corresponds to methionine 1–glutamine 75. A helical transmembrane segment spans residues phenylalanine 76–valine 96. The Periplasmic segment spans residues serine 97–leucine 188. Residues serine 189 to isoleucine 209 form a helical membrane-spanning segment. Residues lysine 210–threonine 714 are Cytoplasmic-facing. Glycine 280–threonine 287 contacts ATP. Histidine 502 is a Zn(2+) binding site. Residue glutamate 503 is part of the active site. 2 residues coordinate Zn(2+): histidine 506 and aspartate 579. The tract at residues proline 688–threonine 714 is disordered. The segment covering glutamate 699–threonine 714 has biased composition (polar residues).

The protein in the central section; belongs to the AAA ATPase family. This sequence in the C-terminal section; belongs to the peptidase M41 family. Homohexamer. The cofactor is Zn(2+).

It is found in the cell inner membrane. Functionally, acts as a processive, ATP-dependent zinc metallopeptidase for both cytoplasmic and membrane proteins. Plays a role in the quality control of integral membrane proteins. In Ralstonia pickettii (strain 12J), this protein is ATP-dependent zinc metalloprotease FtsH.